We begin with the raw amino-acid sequence, 660 residues long: Iron(3+)-hydroxamate import system permease protein FhuB (660 aa).

The next 18 membrane-spanning stretches (helical) occupy residues 5–25 (IALFPALLLALLVIVATALTW), 62–82 (LAISLLVGAGLGLVGVLFQQV), 93–113 (LGVATGAQLGITVTTLWAIPG), 118–138 (QFAAQAGACVVGLIVFGVAWG), 147–167 (ILAGLVVSLYCGAINQLLVIF), 197–217 (QLLGGVMLTLLLLRPLTLMGL), 240–260 (AIVISALLVNAVGIIGFIGLF), 277–297 (LMLASLIGALILWLSDQIILW), 303–323 (MEVSTGSVTALIGAPLLLWLL), 348–368 (LAFALAGGVLLLMAVVVALSF), 391–411 (WPRIMAALFAGVMLAVAGCII), 424–444 (VLGISSGAAFGVVLMLFLVPG), 447–467 (FGWLLPAGSLGAAVTLLIIMI), 479–499 (MLLAGMALSTAFTMLLMMLQA), 528–548 (GIVMVILLAITPLCRRWLTIL), 567–587 (IALLLLAACLTATATMTIGPL), 607–627 (MPHIVISALVGGLLLVFADWC), and 635–655 (FQIPAGLLSTFIGAPYFIYLL).

Belongs to the binding-protein-dependent transport system permease family. FecCD subfamily. In terms of assembly, the complex is composed of two ATP-binding proteins (FhuC), a transmembrane protein (FhuB) and a solute-binding protein (FhuD). FhuB interacts with FhuC. FhuB interacts with FhuD. FhuB binds substrate-loaded FhuD more strongly than FhuD alone.

The protein localises to the cell inner membrane. Its function is as follows. Part of the ABC transporter complex FhuCDB involved in iron(3+)-hydroxamate import. Responsible for the translocation of the substrate across the membrane. The polypeptide is Iron(3+)-hydroxamate import system permease protein FhuB (fhuB) (Escherichia coli (strain K12)).